The sequence spans 211 residues: Homeobox protein Rhox5 (211 aa).

The segment at phenylalanine 38–arginine 129 is disordered. 2 stretches are compositionally biased toward gly residues: residues glycine 52–glutamate 62 and glycine 70–glycine 84. The segment covering histidine 102–methionine 119 has biased composition (basic and acidic residues). Positions methionine 119–arginine 176 form a DNA-binding region, homeobox; atypical.

In terms of tissue distribution, highly expressed in placenta. Lower levels in testis, epididymis, ovary and skeletal muscle.

The protein resides in the nucleus. In terms of biological role, transcription factor required for differentiation of embryonic stem cells (ESCs) into primordial germ cells. The polypeptide is Homeobox protein Rhox5 (Rhox5) (Rattus norvegicus (Rat)).